A 165-amino-acid chain; its full sequence is Large ribosomal subunit protein uL10 (165 aa).

It belongs to the universal ribosomal protein uL10 family. Part of the ribosomal stalk of the 50S ribosomal subunit. The N-terminus interacts with L11 and the large rRNA to form the base of the stalk. The C-terminus forms an elongated spine to which L12 dimers bind in a sequential fashion forming a multimeric L10(L12)X complex.

Forms part of the ribosomal stalk, playing a central role in the interaction of the ribosome with GTP-bound translation factors. The polypeptide is Large ribosomal subunit protein uL10 (Shewanella halifaxensis (strain HAW-EB4)).